The sequence spans 1937 residues: Myosin-8 (1937 aa).

Positions 35-84 (DAKTSVFVAEPKESYVKSVIQSKDGGKVTVKTESGATLTVKEDQVFPMNP) constitute a Myosin N-terminal SH3-like domain. 2 positions are modified to phosphothreonine: threonine 66 and threonine 71. The 694-residue stretch at 88–781 (DKIEDMAMMT…LLGLLEEMRD (694 aa)) folds into the Myosin motor domain. Lysine 132 is subject to N6,N6,N6-trimethyllysine. 181–188 (GESGAGKT) is a binding site for ATP. Tyrosine 389 is modified (phosphotyrosine). Threonine 419 is subject to Phosphothreonine. Position 424 is a phosphotyrosine (tyrosine 424). Position 625 is a phosphoserine (serine 625). The interval 658-680 (LNKLMTNLRSTHPHFVRCIIPNE) is actin-binding. Histidine 756 is modified (pros-methylhistidine). Residues 760–774 (KFGHTKVFFKAGLLG) are actin-binding. The 33-residue stretch at 781–813 (DEKLAQIITRTQAVCRGYLMRVEYQKMLLRRES) folds into the IQ domain. The stretch at 842–1937 (LLKSAETEKE…REVHTKISAE (1096 aa)) forms a coiled coil. A phosphoserine mark is found at serine 1091 and serine 1095. The tract at residues 1125–1171 (IEAERASRAKAEKQRSDLSRELEEISERLEEAGGATSAQVEMNKKRE) is disordered. The span at 1127–1155 (AERASRAKAEKQRSDLSRELEEISERLEE) shows a compositional bias: basic and acidic residues. Residues serine 1161 and serine 1236 each carry the phosphoserine modification. Threonine 1254 carries the phosphothreonine modification. The residue at position 1260 (serine 1260) is a Phosphoserine. At threonine 1285 the chain carries Phosphothreonine. Serine 1291, serine 1302, and serine 1305 each carry phosphoserine. At tyrosine 1463 the chain carries Phosphotyrosine. Phosphothreonine is present on threonine 1466. The residue at position 1491 (tyrosine 1491) is a Phosphotyrosine. Phosphoserine is present on serine 1494. Position 1500 is a phosphothreonine (threonine 1500). Phosphoserine is present on serine 1513. A Phosphothreonine modification is found at threonine 1516. Phosphoserine is present on residues serine 1553, serine 1573, serine 1602, serine 1713, and serine 1725. Threonine 1729 is subject to Phosphothreonine. Serine 1738 carries the post-translational modification Phosphoserine.

This sequence belongs to the TRAFAC class myosin-kinesin ATPase superfamily. Myosin family. Muscle myosin is a hexameric protein that consists of 2 heavy chain subunits (MHC), 2 alkali light chain subunits (MLC) and 2 regulatory light chain subunits (MLC-2).

It is found in the cytoplasm. Its subcellular location is the myofibril. Functionally, muscle contraction. In Mus musculus (Mouse), this protein is Myosin-8 (Myh8).